Consider the following 573-residue polypeptide: Probable cytochrome c oxidase subunit 1 (573 aa).

Residues Ile40–Leu60 form a helical membrane-spanning segment. His86 lines the Fe(II)-heme a pocket. The next 6 helical transmembrane spans lie at Ile89–Leu109, Leu121–Ile141, Leu170–Ile190, Ile213–Gly233, Leu258–Val278, and Ile290–Val310. Residues His264 and Tyr268 each contribute to the Cu cation site. Positions His264 to Tyr268 form a cross-link, 1'-histidyl-3'-tyrosine (His-Tyr). Cu cation contacts are provided by His313 and His314. 2 helical membrane-spanning segments follow: residues Met315–Val335 and Met359–Leu379. His397 serves as a coordination point for heme a3. 3 helical membrane passes run Phe398–Phe418, Leu433–Gly453, and Val476–Phe496. His399 is a binding site for Fe(II)-heme a.

Belongs to the heme-copper respiratory oxidase family.

It is found in the cell membrane. The catalysed reaction is 4 Fe(II)-[cytochrome c] + O2 + 8 H(+)(in) = 4 Fe(III)-[cytochrome c] + 2 H2O + 4 H(+)(out). It participates in energy metabolism; oxidative phosphorylation. Cytochrome c oxidase is the component of the respiratory chain that catalyzes the reduction of oxygen to water. Subunits 1-3 form the functional core of the enzyme complex. CO I is the catalytic subunit of the enzyme. Electrons originating in cytochrome c are transferred via the copper A center of subunit 2 and heme A of subunit 1 to the bimetallic center formed by heme A3 and copper B. The polypeptide is Probable cytochrome c oxidase subunit 1 (ctaD) (Mycobacterium bovis (strain ATCC BAA-935 / AF2122/97)).